Consider the following 283-residue polypeptide: Bifunctional protein FolD (283 aa).

NADP(+)-binding positions include 165 to 167 (GRS), Ser190, and Val231.

This sequence belongs to the tetrahydrofolate dehydrogenase/cyclohydrolase family. Homodimer. Interacts with BrxC.

It carries out the reaction (6R)-5,10-methylene-5,6,7,8-tetrahydrofolate + NADP(+) = (6R)-5,10-methenyltetrahydrofolate + NADPH. It catalyses the reaction (6R)-5,10-methenyltetrahydrofolate + H2O = (6R)-10-formyltetrahydrofolate + H(+). It functions in the pathway one-carbon metabolism; tetrahydrofolate interconversion. Catalyzes the oxidation of 5,10-methylenetetrahydrofolate to 5,10-methenyltetrahydrofolate and then the hydrolysis of 5,10-methenyltetrahydrofolate to 10-formyltetrahydrofolate. The protein is Bifunctional protein FolD of Bacillus subtilis (strain 168).